The following is a 67-amino-acid chain: Alpha-conotoxin-like Qc1.1a (67 aa).

The first 21 residues, 1–21 (MGMRMMFTMFLLVVLAITVVS), serve as a signal peptide directing secretion. Positions 22–46 (FTSDHASDGRNTAANDKASNLMALR) are excised as a propeptide. Disulfide bonds link Cys-49–Cys-55 and Cys-50–Cys-63. Residues 51–53 (PDP) form a lacks the Ser-Xaa-Pro motif that is crucial for potent interaction with nAChR region.

It belongs to the conotoxin A superfamily. As to expression, expressed by the venom duct.

Its subcellular location is the secreted. In terms of biological role, alpha-conotoxins act on postsynaptic membranes, they bind to the nicotinic acetylcholine receptors (nAChR) and thus inhibit them. Has possibly a distinct nAChR binding mode from other alpha-conotoxins, due to a different three residue motif (lacks the Ser-Xaa-Pro motif). This chain is Alpha-conotoxin-like Qc1.1a, found in Conus quercinus (Oak cone).